The chain runs to 148 residues: NADPH-dependent 7-cyano-7-deazaguanine reductase (148 aa).

Cys50 acts as the Thioimide intermediate in catalysis. The active-site Proton donor is the Asp57. Residues 72–74 (VES) and 91–92 (HE) each bind substrate.

The protein belongs to the GTP cyclohydrolase I family. QueF type 1 subfamily.

It is found in the cytoplasm. It catalyses the reaction 7-aminomethyl-7-carbaguanine + 2 NADP(+) = 7-cyano-7-deazaguanine + 2 NADPH + 3 H(+). It participates in tRNA modification; tRNA-queuosine biosynthesis. Its function is as follows. Catalyzes the NADPH-dependent reduction of 7-cyano-7-deazaguanine (preQ0) to 7-aminomethyl-7-deazaguanine (preQ1). In Helicobacter pylori (strain HPAG1), this protein is NADPH-dependent 7-cyano-7-deazaguanine reductase.